The primary structure comprises 453 residues: Ethanolamine ammonia-lyase large subunit (453 aa).

Substrate-binding positions include 160–162 (RLQ) and Asn193. Adenosylcob(III)alamin-binding residues include Pro194 and Gln246. Glu287 contacts substrate. An adenosylcob(III)alamin-binding site is contributed by Ser295. Residue Asp362 coordinates substrate. Position 401 (Met401) interacts with adenosylcob(III)alamin.

Belongs to the EutB family. The basic unit is a heterodimer which dimerizes to form tetramers. The heterotetramers trimerize; 6 large subunits form a core ring with 6 small subunits projecting outwards. It depends on adenosylcob(III)alamin as a cofactor.

The protein resides in the bacterial microcompartment. The catalysed reaction is ethanolamine = acetaldehyde + NH4(+). The protein operates within amine and polyamine degradation; ethanolamine degradation. In terms of biological role, catalyzes the deamination of various vicinal amino-alcohols to oxo compounds. It is spontaneously inactivated by its substrate and reactivated by EutA. May play a role in BMC assembly or maintenance. Expression of the eut operon allows this bacteria to use ethanolamine (EA) as a carbon, nitrogen and energy source. It relies on cobalamin (vitamin B12) both as a cofactor for the ethanolamine ammonia-lyase activity and to induce the operon. EA enhances bacterial survival in macrophages in a concentration-dependent manner, suggesting it is an important nutrient during infection. The polypeptide is Ethanolamine ammonia-lyase large subunit (Salmonella typhimurium (strain LT2 / SGSC1412 / ATCC 700720)).